The sequence spans 250 residues: DNA polymerase sliding clamp (250 aa).

This sequence belongs to the PCNA family. Homotrimer. The subunits circularize to form a toroid; DNA passes through its center. Replication factor C (RFC) is required to load the toroid on the DNA.

In terms of biological role, sliding clamp subunit that acts as a moving platform for DNA processing. Responsible for tethering the catalytic subunit of DNA polymerase and other proteins to DNA during high-speed replication. The protein is DNA polymerase sliding clamp of Methanococcus maripaludis (strain C6 / ATCC BAA-1332).